The chain runs to 463 residues: DNA-binding protein K10 (463 aa).

The segment covering 1 to 13 (MVSKNQFYQNWTM) has biased composition (polar residues). The interval 1–304 (MVSKNQFYQN…RNGPGPGPMM (304 aa)) is disordered. Over residues 14–50 (QSQQQHPHQMQQQFQQQQQPNLQHRNNQSNNNNCNNN) the composition is skewed to low complexity. Residues 85-94 (QMMFSSSQMP) are compositionally biased toward polar residues. 7 tandem repeats follow at residues 87 to 94 (MFSSSQMP), 95 to 102 (SDPLYIDF), 103 to 110 (SSPPPGFK), 111 to 118 (HNQVGSPK), 119 to 126 (KKSMKGIK), 127 to 134 (QQQHPSPN), and 135 to 142 (QQQPPSPN). The interval 87 to 142 (MFSSSQMPSDPLYIDFSSPPPGFKHNQVGSPKKKSMKGIKQQQHPSPNQQQPPSPN) is 7 X approximate tandem repeats. Residues 142 to 193 (NQQQHPSPNQQQHPSPNQQQHPNSNQQQHLSPNQQQGKMNNQNNNHMNQSQQ) are compositionally biased toward low complexity. Polar residues predominate over residues 194–214 (PFNNQMNGSDWQRHPGNNPNQ). 2 stretches are compositionally biased toward pro residues: residues 225 to 270 (GPPP…PPVP) and 282 to 291 (GGPPPPPPPL). Residues 397–416 (DELFAQYKGQRDKFVSLYEA) constitute a DNA-binding region (H-T-H motif). A disordered region spans residues 426-463 (AATVKAKDAKSDKDKNAISSQSAAPKAGSAKDATIPNP). Residues 430-441 (KAKDAKSDKDKN) show a composition bias toward basic and acidic residues.

Interacts (via N-terminus) with sqd; the interaction is direct and may be involved in localization of sqd to the oocyte during oogenesis.

The protein resides in the nucleus. Its function is as follows. May be involved in localization of sqd to the oocyte during oogenesis. In Drosophila melanogaster (Fruit fly), this protein is DNA-binding protein K10 (fs(1)K10).